We begin with the raw amino-acid sequence, 444 residues long: UDP-N-acetylmuramate--L-alanine ligase (444 aa).

110 to 116 (GAHGKTS) contacts ATP.

This sequence belongs to the MurCDEF family. In terms of processing, phosphorylated by StkP in vitro. Dephosphorylated by PhpP in vitro.

Its subcellular location is the cytoplasm. The enzyme catalyses UDP-N-acetyl-alpha-D-muramate + L-alanine + ATP = UDP-N-acetyl-alpha-D-muramoyl-L-alanine + ADP + phosphate + H(+). It participates in cell wall biogenesis; peptidoglycan biosynthesis. Functionally, cell wall formation. This chain is UDP-N-acetylmuramate--L-alanine ligase, found in Streptococcus pneumoniae serotype 4 (strain ATCC BAA-334 / TIGR4).